The chain runs to 180 residues: Inosine/xanthosine triphosphatase (180 aa).

8–13 (TTNPAK) is a substrate binding site. D38 contacts Mg(2+).

Belongs to the YjjX NTPase family. As to quaternary structure, homodimer. The cofactor is Mg(2+). Mn(2+) is required as a cofactor.

It carries out the reaction XTP + H2O = XDP + phosphate + H(+). The enzyme catalyses ITP + H2O = IDP + phosphate + H(+). Phosphatase that hydrolyzes non-canonical purine nucleotides such as XTP and ITP to their respective diphosphate derivatives. Probably excludes non-canonical purines from DNA/RNA precursor pool, thus preventing their incorporation into DNA/RNA and avoiding chromosomal lesions. The polypeptide is Inosine/xanthosine triphosphatase (Yersinia pseudotuberculosis serotype O:1b (strain IP 31758)).